The sequence spans 1374 residues: MANTLVGRKRIRKFFGKIKEVAEMPNLIEVQKASYDQFLMVDEPEGGRADEGLQSVFKSVFPISDFASTALLEFVRYTFEAPKYDVDECRQRGITFAAPLKVTLRLIVFDVDPDTQAKSVKDIKEQDVYMGDMPLMTENGTFIVNGTERVIVSQMHRSPGVFFDHDKGKTHSSGKLLFAARIIPYRGSWLDVEFDAKDIVHVRIDRKRKLPATSLLYALGLDGEEILSTFYNKVVYDRDGADWRVPFDAERMKGMKATVDLIDADSGEVVLEAGKKLNARNARQITEKGTKFLKATDEDLVGQYVAEDLVNAQTGEIWAEAGEEVTDKLLKSLEEVGITELPVLDIDHVNIGPYIRNTLAVDKNSNREGALFDIYRVMRPGEPPTLETAEAMFHSLFFDSERYDLSAVGRVKMNMRLDLDAADTVRTLRKEDMLAVVKALVELRDGKGEVDDIDHLGNRRVRSVGELMENQYRLGLLRMERAIRERMSQVDIDTVMPQDLINAKPAAAAVREFFGSSQLSQFMDQTNPLSEVTHKRRLSALGPGGLTRERAGFEVRDVHPTHYGRICPIETPEGPNIGLINSLATFARVNKYGFIETPFRRVRDGVVTDEVAYLSAMEEAKYYVAQANAQMDENRKLTEDLVVCRRAGEVIVVGPERVDLMDVSPKQLVSVAAALIPFLENDDANRALMGSNMQRQAVPLVRADAPFVGTGMEAVVARDSGAAIAARRAGIIDQVDATRIVIRATEEADANKPGVDIYRLQKFQRSNQSTCITQKPLVRVGEFVKKGEIIADGPSTEFGELALGRNVLVAFMPWNGYNFEDSILLSERIVKDDVFTSIHIEEFEVMARDTKLGPEEITRDIPNVSEEALKNLDEAGIVYIGAEVNAGDILVGKITPKGESPMTPEEKLLRAIFGEKASDVRDTSLRVPPGVTGTIVEVRVFNRHGVDKDERAQAIEREEIERLAKDRDDEQAILDRNTYARLADVLIGQAPVAGPKGFKKDTTLTRELINDYPRSQWWQFAVIDDRLMTEMEAMQKQYDESKKRLEQRFLDKVEKLQRGDELPPGVMKMVKVFVAVKRKIQPGDKMAGRHGNKGVVSRIVPIEDMPFLEDGTHADIVLNPLGVPSRMNVGQILETHLGWAAAGLGRKVSKAVDAYLKTQDIAPLREEMKAIYSPGELDGLTDEELAEAGNNVRRGVPMATPVFNGAKEADIEQMLEMAGLDRSAQSTLYDGRTGEPFDRKVTMGYIYMLKLHHLVDDKIHARSIGPYSLVTQQPLGGKAQFGGQRFGEMEVWALEAYGAAYTLQEMLTVKSDDVAGRTKVYEAIVRGDDTFEAGIPESFNVLVKEMRSLGLNVELTSSKKAANDQLEPPADAAE.

The protein belongs to the RNA polymerase beta chain family. The RNAP catalytic core consists of 2 alpha, 1 beta, 1 beta' and 1 omega subunit. When a sigma factor is associated with the core the holoenzyme is formed, which can initiate transcription.

The enzyme catalyses RNA(n) + a ribonucleoside 5'-triphosphate = RNA(n+1) + diphosphate. In terms of biological role, DNA-dependent RNA polymerase catalyzes the transcription of DNA into RNA using the four ribonucleoside triphosphates as substrates. The protein is DNA-directed RNA polymerase subunit beta of Methylobacterium radiotolerans (strain ATCC 27329 / DSM 1819 / JCM 2831 / NBRC 15690 / NCIMB 10815 / 0-1).